The chain runs to 443 residues: Anamorsin homolog (443 aa).

Residues 136-301 (LSSAPRVLVL…AAGVADALSG (166 aa)) form an N-terminal SAM-like domain region. The tract at residues 302 to 331 (NRGALPNGTAQTDGDDFIDESTLIDPTESY) is linker. [2Fe-2S] cluster-binding residues include cysteine 341, cysteine 348, cysteine 351, and cysteine 353. The fe-S binding site A stretch occupies residues 341–353 (CASRPKACPNCTC). [4Fe-4S] cluster-binding residues include cysteine 380, cysteine 383, cysteine 391, and cysteine 394. 2 short sequence motifs (cx2C motif) span residues 380–383 (CGNC) and 391–394 (CAGC). The segment at 380–394 (CGNCYLGDAFRCAGC) is fe-S binding site B.

It belongs to the anamorsin family. Monomer. [2Fe-2S] cluster serves as cofactor. Requires [4Fe-4S] cluster as cofactor.

It is found in the cytoplasm. The protein resides in the mitochondrion intermembrane space. Component of the cytosolic iron-sulfur (Fe-S) protein assembly (CIA) machinery. Required for the maturation of extramitochondrial Fe-S proteins. Part of an electron transfer chain functioning in an early step of cytosolic Fe-S biogenesis, facilitating the de novo assembly of a [4Fe-4S] cluster on the cytosolic Fe-S scaffold complex. Electrons are transferred from NADPH via a FAD- and FMN-containing diflavin oxidoreductase. Together with the diflavin oxidoreductase, also required for the assembly of the diferric tyrosyl radical cofactor of ribonucleotide reductase (RNR), probably by providing electrons for reduction during radical cofactor maturation in the catalytic small subunit. The chain is Anamorsin homolog from Toxoplasma gondii (strain ATCC 50861 / VEG).